The chain runs to 261 residues: [LysW]-aminoadipate/[LysW]-glutamate kinase (261 aa).

Residues 35–36, Arg62, and Asn166 each bind substrate; that span reads GG.

This sequence belongs to the acetylglutamate kinase family. LysZ subfamily.

The protein resides in the cytoplasm. The catalysed reaction is [amino-group carrier protein]-C-terminal-N-(1,4-dicarboxybutan-1-yl)-L-glutamine + ATP = [amino-group carrier protein]-C-terminal-N-(1-carboxy-5-phosphooxy-5-oxopentan-1-yl)-L-glutamine + ADP. It catalyses the reaction [amino-group carrier protein]-C-terminal-gamma-(L-glutamyl)-L-glutamate + ATP = [amino-group carrier protein]-C-terminal-gamma-(5-phospho-L-glutamyl)-L-glutamate + ADP. The protein operates within amino-acid biosynthesis; L-lysine biosynthesis via AAA pathway; L-lysine from L-alpha-aminoadipate (Thermus route): step 2/5. Its pathway is amino-acid biosynthesis; L-arginine biosynthesis. Functionally, involved in both the arginine and lysine biosynthetic pathways. Phosphorylates the LysW-bound precursors glutamate (for arginine biosynthesis), respectively alpha-aminoadipate (for lysine biosynthesis). In Sulfurisphaera tokodaii (strain DSM 16993 / JCM 10545 / NBRC 100140 / 7) (Sulfolobus tokodaii), this protein is [LysW]-aminoadipate/[LysW]-glutamate kinase.